Reading from the N-terminus, the 687-residue chain is Polyphosphate kinase (687 aa).

Asn-45 contributes to the ATP binding site. Mg(2+)-binding residues include Arg-373 and Arg-403. Catalysis depends on His-433, which acts as the Phosphohistidine intermediate. ATP-binding residues include Tyr-466, Arg-562, and His-590. The region spanning 585–615 is the PLD phosphodiesterase domain; it reads DRFLEHDRVYVFENKGDKLVYLSSADWMTRN.

It belongs to the polyphosphate kinase 1 (PPK1) family. Mg(2+) is required as a cofactor. Post-translationally, an intermediate of this reaction is the autophosphorylated ppk in which a phosphate is covalently linked to a histidine residue through a N-P bond.

It carries out the reaction [phosphate](n) + ATP = [phosphate](n+1) + ADP. Functionally, catalyzes the reversible transfer of the terminal phosphate of ATP to form a long-chain polyphosphate (polyP). This is Polyphosphate kinase from Yersinia pestis.